Here is a 1226-residue protein sequence, read N- to C-terminus: Arf guanine nucleotide exchange factor SYT1 (1226 aa).

Disordered regions lie at residues 17–39 (HSND…DKLR) and 113–158 (RNGQ…RNSK). A compositionally biased stretch (basic and acidic residues) spans 131 to 142 (SIEKVPKPDGER). At threonine 277 the chain carries Phosphothreonine. Disordered stretches follow at residues 311–405 (NSLM…TGMS), 954–1022 (STGS…NEDY), and 1178–1198 (LEHG…DGID). The span at 349–360 (LSRSRSQSTSFV) shows a compositional bias: polar residues. Position 369 is a phosphoserine (serine 369). Residues 386 to 405 (GPTSVYNNKSNANSTITGMS) show a composition bias toward polar residues. An SEC7 domain is found at 405–620 (SRRSSSIVNA…TYFYENVTAK (216 aa)). In terms of domain architecture, PH spans 844 to 1074 (ILQMGAIMNL…DSINLFSAYD (231 aa)). Low complexity-rich tracts occupy residues 956–969 (GSHT…SSSA) and 994–1017 (SSVS…SSND).

The protein localises to the cytoplasm. Inhibited by brefeldin A. Its function is as follows. Guanine nucleotide exchange factor for Arf GTPases, stimulating the nucleotide exchange from the GDP-bound to the GTP-bound form. Catalyzes both the GDP release by and the GTP binding to ARF2. Has no exchange activity on Rab GTPases. Involved in vesicular transport. The chain is Arf guanine nucleotide exchange factor SYT1 (SYT1) from Saccharomyces cerevisiae (strain ATCC 204508 / S288c) (Baker's yeast).